The chain runs to 358 residues: ATP-dependent (S)-NAD(P)H-hydrate dehydratase (358 aa).

The YjeF C-terminal domain occupies 63-354 (LLQSAKNVIP…QQIHQAFEEL (292 aa)). (6S)-NADPHX is bound by residues G163 and 220-226 (NVVEFDR). Residues 261 to 265 (KGQHD) and 280 to 289 (GSNRRCGGQG) each bind ATP. Residue D290 participates in (6S)-NADPHX binding.

This sequence belongs to the NnrD/CARKD family. Requires Mg(2+) as cofactor.

It catalyses the reaction (6S)-NADHX + ATP = ADP + phosphate + NADH + H(+). It carries out the reaction (6S)-NADPHX + ATP = ADP + phosphate + NADPH + H(+). Catalyzes the dehydration of the S-form of NAD(P)HX at the expense of ATP, which is converted to ADP. Together with NAD(P)HX epimerase, which catalyzes the epimerization of the S- and R-forms, the enzyme allows the repair of both epimers of NAD(P)HX, a damaged form of NAD(P)H that is a result of enzymatic or heat-dependent hydration. The polypeptide is ATP-dependent (S)-NAD(P)H-hydrate dehydratase (Nematostella vectensis (Starlet sea anemone)).